The sequence spans 150 residues: Endoribonuclease YbeY (150 aa).

Zn(2+) contacts are provided by His-115, His-119, and His-125.

The protein belongs to the endoribonuclease YbeY family. It depends on Zn(2+) as a cofactor.

Its subcellular location is the cytoplasm. Functionally, single strand-specific metallo-endoribonuclease involved in late-stage 70S ribosome quality control and in maturation of the 3' terminus of the 16S rRNA. This is Endoribonuclease YbeY from Aquifex aeolicus (strain VF5).